Here is a 376-residue protein sequence, read N- to C-terminus: Glucose-1-phosphate adenylyltransferase (376 aa).

Alpha-D-glucose 1-phosphate contacts are provided by residues Y101, G166, 181-182, and S192; that span reads EK.

Belongs to the bacterial/plant glucose-1-phosphate adenylyltransferase family. Homotetramer.

The enzyme catalyses alpha-D-glucose 1-phosphate + ATP + H(+) = ADP-alpha-D-glucose + diphosphate. Its pathway is glycan biosynthesis; glycogen biosynthesis. In terms of biological role, involved in the biosynthesis of ADP-glucose, a building block required for the elongation reactions to produce glycogen. Catalyzes the reaction between ATP and alpha-D-glucose 1-phosphate (G1P) to produce pyrophosphate and ADP-Glc. The protein is Glucose-1-phosphate adenylyltransferase of Bacillus cereus (strain ATCC 14579 / DSM 31 / CCUG 7414 / JCM 2152 / NBRC 15305 / NCIMB 9373 / NCTC 2599 / NRRL B-3711).